The chain runs to 83 residues: Toxin TdNa3 (83 aa).

A signal peptide spans methionine 1–serine 20. The LCN-type CS-alpha/beta domain occupies lysine 21 to glycine 82. 4 cysteine pairs are disulfide-bonded: cysteine 31-cysteine 81, cysteine 35-cysteine 57, cysteine 43-cysteine 62, and cysteine 47-cysteine 64. Cysteine 81 is modified (cysteine amide).

It belongs to the long (4 C-C) scorpion toxin superfamily. Sodium channel inhibitor family. Beta subfamily. As to expression, expressed by the venom gland.

It is found in the secreted. Its function is as follows. Inhibits the sodium currents (Nav) in an apparent irreversible manner. Produces small depolarization and induces repetitive firing in squid axons. Is specific for arthropods (crickets, triatomides, crabs and squids), but is non-toxic to mice. The sequence is that of Toxin TdNa3 from Tityus discrepans (Venezuelan scorpion).